Consider the following 209-residue polypeptide: Large ribosomal subunit protein uL4 (209 aa).

Positions 45 to 77 (RQGTHKAKERAEVTGSTRKIKKQKGTGTARAGS) are disordered.

It belongs to the universal ribosomal protein uL4 family. Part of the 50S ribosomal subunit.

Its function is as follows. One of the primary rRNA binding proteins, this protein initially binds near the 5'-end of the 23S rRNA. It is important during the early stages of 50S assembly. It makes multiple contacts with different domains of the 23S rRNA in the assembled 50S subunit and ribosome. Functionally, forms part of the polypeptide exit tunnel. This chain is Large ribosomal subunit protein uL4, found in Flavobacterium johnsoniae (strain ATCC 17061 / DSM 2064 / JCM 8514 / BCRC 14874 / CCUG 350202 / NBRC 14942 / NCIMB 11054 / UW101) (Cytophaga johnsonae).